The sequence spans 364 residues: MLPIAKLEAVQRRFQELEHLMCSPAVLAAPAELQRLNRERTEIEPVVVAFARMRDVERRIAEDREALSDPDLSELAQAELPELELERERLAAELEVLLLPKDPNDTRNTVIEIRSGEGGEEAALFAADLFRMLCRYAETKRWKVEVLNLSEASAGGYKEVAALITGQDVYSHLRYEGGVHRVQRVPSTETQGRIHTSTATVAVLPEADEVDVHIDEKDLEISIAASGGPGGQGVNTTNSAVQIKHLPTGMIVKCQDERSQLKNKAKAMKVLRSRLLELEQRRQEEAQSAERRTMVGTGERAQKVRTYNFPQNRVTDHRIGLTLHKLDKIIEGDLEELIGALRTHRQAELLRRGGLSGPALEPAT.

N5-methylglutamine is present on glutamine 232.

This sequence belongs to the prokaryotic/mitochondrial release factor family. Methylated by PrmC. Methylation increases the termination efficiency of RF1.

It is found in the cytoplasm. Peptide chain release factor 1 directs the termination of translation in response to the peptide chain termination codons UAG and UAA. This is Peptide chain release factor 1 from Sorangium cellulosum (strain So ce56) (Polyangium cellulosum (strain So ce56)).